The chain runs to 359 residues: MAVVAGLVRGPLRQASGLLKRRFHRSAPAAVQLTVREAINQGMDEELERDEKVFLLGEEVAQYDGAYKVSRGLWKKYGDKRIIDTPISEMGFAGIAVGAAMAGLRPICEFMTFNFSMQAIDQVINSAAKTYYMSAGLQPVPIVFRGPNGASAGVAAQHSQCFAAWYGHCPGLKVVSPWNSEDAKGLIKSAIRDNNPVVMLENELMYGVAFELPAEAQSKDFLIPIGKAKIERQGTHITVVAHSRPVGHCLEAAAVLSKEGIECEVINLRTIRPMDIEAIEASVMKTNHLVTVEGGWPQFGVGAEICARIMEGPAFNFLDAPAVRVTGADVPMPYAKVLEDNSVPQVKDIIFAVKKTLNI.

A mitochondrion-targeting transit peptide spans 1–30 (MAVVAGLVRGPLRQASGLLKRRFHRSAPAA). The residue at position 67 (Y67) is a Phosphotyrosine. Thiamine diphosphate is bound at residue E89. The K(+) site is built by I142, A190, I191, D193, and N195. K354 carries the N6-acetyllysine modification.

Heterotetramer of two PDHA1 and two PDHB subunits. The heterotetramer interacts with DLAT, and is part of the multimeric pyruvate dehydrogenase complex that contains multiple copies of pyruvate dehydrogenase (E1), dihydrolipoamide acetyltransferase (DLAT, E2) and lipoamide dehydrogenase (DLD, E3). These subunits are bound to an inner core composed of about 48 DLAT and 12 PDHX molecules. Interacts with DLAT. It depends on thiamine diphosphate as a cofactor.

The protein localises to the mitochondrion matrix. It carries out the reaction N(6)-[(R)-lipoyl]-L-lysyl-[protein] + pyruvate + H(+) = N(6)-[(R)-S(8)-acetyldihydrolipoyl]-L-lysyl-[protein] + CO2. Its function is as follows. The pyruvate dehydrogenase complex catalyzes the overall conversion of pyruvate to acetyl-CoA and CO(2), and thereby links the glycolytic pathway to the tricarboxylic cycle. In Mus musculus (Mouse), this protein is Pyruvate dehydrogenase E1 component subunit beta, mitochondrial (Pdhb).